The following is a 337-amino-acid chain: uncharacterized protein (337 aa).

The ABC transporter domain maps to 5–235 (VEFDNVSRLY…PRTPFVAGFV (231 aa)). 37 to 44 (GPSGSGKT) contacts ATP.

This sequence belongs to the ABC transporter superfamily.

Functionally, probably part of the ABC transporter complex YdcSTUV. Probably responsible for energy coupling to the transport system. This is an uncharacterized protein from Escherichia coli (strain K12).